The chain runs to 255 residues: Homeobox protein DLX-1 (255 aa).

Residues 1-14 show a composition bias toward polar residues; sequence MTMTTMPESLNSPV. Disordered stretches follow at residues 1 to 38 and 95 to 118; these read MTMT…MSHG and SLAQ…EGGE. Residues 25–36 are compositionally biased toward low complexity; that stretch reads PPNQQMSPSPMS. Residues 100–112 show a composition bias toward basic and acidic residues; sequence RLEDPGADSEKST. The segment at residues 128-187 is a DNA-binding region (homeobox); it reads IRKPRTIYSSLQLQALNRRFQQTQYLALPERAELAASLGLTQTQVKIWFQNKRSKFKKLM. The interval 204 to 233 is disordered; the sequence is ALSAGSPPVPPGWNPNSSSGKGSGSSAGSY. Positions 217 to 232 are enriched in low complexity; the sequence is NPNSSSGKGSGSSAGS.

It belongs to the distal-less homeobox family. As to quaternary structure, interacts with SMAD4 (via homeobox DNA-binding domain). Interacts (via homeobox DNA-binding domain) with POU4F2; this interaction suppresses DLX1-mediated transcriptional activity in postnatal retina and enhances retinal ganglion cell (RGC) differentiation. As to expression, expressed in a restricted region of the developing brain, within the diencephalon and the adjacent telencephalic regions.

The protein localises to the nucleus. In terms of biological role, plays a role as a transcriptional activator or repressor. Inhibits several cytokine signaling pathways, such as TGFB1, activin-A/INHBA and BMP4 by interfering with the transcriptional stimulatory activity of transcription factors, such as MSX2, FAST2, SMAD2 and SMAD3 during hematopoietic cell differentiation. Plays a role in terminal differentiation of interneurons, such as amacrine and bipolar cells in the developing retina. Likely to play a regulatory role in the development of the ventral forebrain. May play a role in craniofacial patterning and morphogenesis and may be involved in the early development of diencephalic subdivisions. The polypeptide is Homeobox protein DLX-1 (Dlx1) (Mus musculus (Mouse)).